The chain runs to 666 residues: Collagen alpha-1(XXV) chain (666 aa).

The segment at 1–24 (MLVKKLAGKGGGRESGSEDPRPLG) is disordered. The Cytoplasmic portion of the chain corresponds to 1-33 (MLVKKLAGKGGGRESGSEDPRPLGQRCAGTMPS). Over residues 11 to 21 (GGRESGSEDPR) the composition is skewed to basic and acidic residues. The helical; Signal-anchor for type II membrane protein transmembrane segment at 34–54 (CTALATLLSVVAVAFCFYLGV) threads the bilayer. The Extracellular portion of the chain corresponds to 55 to 666 (KTNDLQARIA…GLPMPGCWQK (612 aa)). Residues 116 to 168 (LECNCPAGPPGKRGKRGRRGESGPPGQPGPQGPPGPKGDKGEQGDQGPRMVFP) form a disordered region. Positions 121 to 164 (PAGPPGKRGKRGRRGESGPPGQPGPQGPPGPKGDKGEQGDQGPR) constitute a Collagen-like 1 domain. The segment covering 140–151 (PGQPGPQGPPGP) has biased composition (pro residues). An interaction with amyloid-beta peptide region spans residues 181 to 188 (LIKRRLIK). Disordered regions lie at residues 189–428 (GDQG…ATEI) and 445–666 (LTVT…CWQK). Collagen-like domains are found at residues 192–247 (GQAG…QKGS), 249–308 (GAPG…PGSS), 311–370 (GIKG…AGPP), 373–425 (GERG…DPGA), 455–514 (GPQG…KGEK), 529–588 (GPPG…KGAM), and 589–648 (GEPG…DGLD). Residues 196–208 (PPGPPGPPGPRGP) show a composition bias toward pro residues. Residues 230 to 245 (PGEQGLMGPLGPPGQK) show a composition bias toward low complexity. The segment covering 280–290 (EPGKEGEKGDA) has biased composition (basic and acidic residues). Low complexity predominate over residues 336–358 (LPGIKGEPGFIGPQGEPGLPGLP). Basic and acidic residues-rich tracts occupy residues 361–377 (KGDRGEAGPPGRGERGD) and 398–407 (SKGDRGDKGD). The span at 457–466 (QGLQGPKGEQ) shows a compositional bias: low complexity. Over residues 494–503 (GEKGGLGLPG) the composition is skewed to gly residues. A compositionally biased stretch (pro residues) spans 528 to 543 (IGPPGPPGPHGPPGPM). Residues 615–638 (RGEKGDLGEKGEKGFRGVKGEKGE) show a composition bias toward basic and acidic residues.

As to quaternary structure, forms homodimers and homotrimers. Binds to the fibrillized forms of amyloid-beta protein 40 (beta-APP40) and amyloid-betad protein 42 (beta-APP42). Found associated with beta-APP42 more frequently than with beta-APP40. Undergoes proteolytic cleavage by furin protease to yield the soluble collagen-like Alzheimer amyloid plaque component. Post-translationally, glycosylated. In terms of processing, hydroxylated on proline and lysine residues. In terms of tissue distribution, expressed predominantly in neurons with low levels also detected in heart, testis and eye.

The protein localises to the membrane. In terms of biological role, inhibits fibrillization of amyloid-beta peptide during the elongation phase. Has also been shown to assemble amyloid fibrils into protease-resistant aggregates. Binds heparin. The polypeptide is Collagen alpha-1(XXV) chain (Mus musculus (Mouse)).